We begin with the raw amino-acid sequence, 137 residues long: Large ribosomal subunit protein uL16 (137 aa).

Belongs to the universal ribosomal protein uL16 family. In terms of assembly, part of the 50S ribosomal subunit.

Binds 23S rRNA and is also seen to make contacts with the A and possibly P site tRNAs. This chain is Large ribosomal subunit protein uL16, found in Rhizobium johnstonii (strain DSM 114642 / LMG 32736 / 3841) (Rhizobium leguminosarum bv. viciae).